The primary structure comprises 354 residues: DNA polymerase IV (354 aa).

The 182-residue stretch at 6-187 folds into the UmuC domain; it reads IIHIDCDCFY…LPVTKLHGVG (182 aa). Mg(2+) is bound by residues Asp10 and Asp105. The active site involves Glu106.

This sequence belongs to the DNA polymerase type-Y family. In terms of assembly, monomer. The cofactor is Mg(2+).

The protein localises to the cytoplasm. It catalyses the reaction DNA(n) + a 2'-deoxyribonucleoside 5'-triphosphate = DNA(n+1) + diphosphate. In terms of biological role, poorly processive, error-prone DNA polymerase involved in untargeted mutagenesis. Copies undamaged DNA at stalled replication forks, which arise in vivo from mismatched or misaligned primer ends. These misaligned primers can be extended by PolIV. Exhibits no 3'-5' exonuclease (proofreading) activity. May be involved in translesional synthesis, in conjunction with the beta clamp from PolIII. The chain is DNA polymerase IV from Pseudomonas syringae pv. syringae (strain B728a).